Consider the following 209-residue polypeptide: Large ribosomal subunit protein uL4 (209 aa).

A disordered region spans residues 44–77 (QRQGTHKSKERSEVSGSTRKLIRQKGGGGARRGD).

Belongs to the universal ribosomal protein uL4 family. As to quaternary structure, part of the 50S ribosomal subunit.

One of the primary rRNA binding proteins, this protein initially binds near the 5'-end of the 23S rRNA. It is important during the early stages of 50S assembly. It makes multiple contacts with different domains of the 23S rRNA in the assembled 50S subunit and ribosome. Functionally, forms part of the polypeptide exit tunnel. The sequence is that of Large ribosomal subunit protein uL4 from Parabacteroides distasonis (strain ATCC 8503 / DSM 20701 / CIP 104284 / JCM 5825 / NCTC 11152).